We begin with the raw amino-acid sequence, 395 residues long: 8-amino-7-oxononanoate synthase (395 aa).

A pyridoxal 5'-phosphate-binding site is contributed by 108 to 109; that stretch reads GF. Histidine 134 is a binding site for substrate. Pyridoxal 5'-phosphate contacts are provided by residues serine 184, 209-212, and 240-243; these read DDAH and TLSK. Lysine 243 carries the N6-(pyridoxal phosphate)lysine modification. Threonine 357 serves as a coordination point for substrate.

Belongs to the class-II pyridoxal-phosphate-dependent aminotransferase family. BioF subfamily. As to quaternary structure, homodimer. Pyridoxal 5'-phosphate is required as a cofactor.

It carries out the reaction 6-carboxyhexanoyl-[ACP] + L-alanine + H(+) = (8S)-8-amino-7-oxononanoate + holo-[ACP] + CO2. It participates in cofactor biosynthesis; biotin biosynthesis. Functionally, catalyzes the decarboxylative condensation of pimeloyl-[acyl-carrier protein] and L-alanine to produce 8-amino-7-oxononanoate (AON), [acyl-carrier protein], and carbon dioxide. This is 8-amino-7-oxononanoate synthase from Fervidobacterium nodosum (strain ATCC 35602 / DSM 5306 / Rt17-B1).